Consider the following 270-residue polypeptide: MEYIKKLLCTMSVLLLIIFIGGCGNMKDEQKKEEQTNKTDSKEEQIKKSFAKTLDMYPIKNLEDLYDKEGYRDGEFKKGDKGTWTISTDFAKSNKPGEMDSEGMVLHLNRNTRTATGYYTIRTTYDEVGKMTREKNYRVELKNNKIVLLDKVEDENLKHKIENFKFFGQYADFKDLKNYKNGRITINENVPYYEAEYKINNSDGNVKKLRENYPITAKKSPILKLHIDGDIKGSSVGYKQIEYTFSKEKEDETFMSDFLNFGPTKGGNND.

An N-terminal signal peptide occupies residues 1-22 (MEYIKKLLCTMSVLLLIIFIGG). Cys23 is lipidated: N-palmitoyl cysteine. A lipid anchor (S-diacylglycerol cysteine) is attached at Cys23.

This sequence belongs to the staphylococcal tandem lipoprotein family.

The protein localises to the cell membrane. This is an uncharacterized protein from Staphylococcus aureus (strain bovine RF122 / ET3-1).